A 136-amino-acid chain; its full sequence is Protein NrdI (136 aa).

The protein belongs to the NrdI family.

Functionally, probably involved in ribonucleotide reductase function. This is Protein NrdI from Escherichia coli (strain 55989 / EAEC).